Consider the following 81-residue polypeptide: Extracellular matrix regulatory protein B (81 aa).

Regulates the biosynthesis of the extracellular matrix and the biofilm formation. May act as an enhancer of biofilm gene expression. Acts in parallel to the pathway that governs SinR derepression. In Bacillus subtilis (strain 168), this protein is Extracellular matrix regulatory protein B.